Reading from the N-terminus, the 497-residue chain is uncharacterized protein (497 aa).

Helical transmembrane passes span 91–111, 119–139, 149–169, 179–199, 215–235, 283–303, 319–339, 347–367, 374–394, 406–426, and 439–459; these read WVGT…STLL, VTSA…LVHS, LLGI…AQWY, AFLV…SYGL, ILFI…FIHI, MYLY…LSNF, LLMN…FGLI, MDIA…IAFA, LAGY…LSCI, FMSA…PQTF, and VSFV…YAVN.

The protein belongs to the major facilitator superfamily. Allantoate permease family.

The protein resides in the golgi apparatus. It is found in the membrane. This is an uncharacterized protein from Schizosaccharomyces pombe (strain 972 / ATCC 24843) (Fission yeast).